The primary structure comprises 310 residues: tRNA dimethylallyltransferase (310 aa).

14-21 (GPTASGKT) contacts ATP. 16 to 21 (TASGKT) contributes to the substrate binding site. The tract at residues 39-42 (DSMQ) is interaction with substrate tRNA.

It belongs to the IPP transferase family. As to quaternary structure, monomer. Mg(2+) is required as a cofactor.

It carries out the reaction adenosine(37) in tRNA + dimethylallyl diphosphate = N(6)-dimethylallyladenosine(37) in tRNA + diphosphate. In terms of biological role, catalyzes the transfer of a dimethylallyl group onto the adenine at position 37 in tRNAs that read codons beginning with uridine, leading to the formation of N6-(dimethylallyl)adenosine (i(6)A). The protein is tRNA dimethylallyltransferase of Corynebacterium jeikeium (strain K411).